The chain runs to 496 residues: Probable cytosol aminopeptidase (496 aa).

Mn(2+) contacts are provided by lysine 258 and aspartate 263. Residue lysine 270 is part of the active site. Mn(2+) is bound by residues aspartate 281, aspartate 340, and glutamate 342. Arginine 344 is an active-site residue.

Belongs to the peptidase M17 family. Mn(2+) is required as a cofactor.

The protein resides in the cytoplasm. It catalyses the reaction Release of an N-terminal amino acid, Xaa-|-Yaa-, in which Xaa is preferably Leu, but may be other amino acids including Pro although not Arg or Lys, and Yaa may be Pro. Amino acid amides and methyl esters are also readily hydrolyzed, but rates on arylamides are exceedingly low.. The enzyme catalyses Release of an N-terminal amino acid, preferentially leucine, but not glutamic or aspartic acids.. Presumably involved in the processing and regular turnover of intracellular proteins. Catalyzes the removal of unsubstituted N-terminal amino acids from various peptides. This is Probable cytosol aminopeptidase from Helicobacter pylori (strain P12).